We begin with the raw amino-acid sequence, 156 residues long: Small ribosomal subunit protein uS7 (156 aa).

This sequence belongs to the universal ribosomal protein uS7 family. In terms of assembly, part of the 30S ribosomal subunit. Contacts proteins S9 and S11.

In terms of biological role, one of the primary rRNA binding proteins, it binds directly to 16S rRNA where it nucleates assembly of the head domain of the 30S subunit. Is located at the subunit interface close to the decoding center, probably blocks exit of the E-site tRNA. This chain is Small ribosomal subunit protein uS7, found in Moorella thermoacetica (strain ATCC 39073 / JCM 9320).